Consider the following 40-residue polypeptide: Photosystem II reaction center protein J (40 aa).

Residues 8–28 (IPLWLIGTVTGIPVIGLVGVF) form a helical membrane-spanning segment.

This sequence belongs to the PsbJ family. PSII is composed of 1 copy each of membrane proteins PsbA, PsbB, PsbC, PsbD, PsbE, PsbF, PsbH, PsbI, PsbJ, PsbK, PsbL, PsbM, PsbT, PsbX, PsbY, PsbZ, Psb30/Ycf12, at least 3 peripheral proteins of the oxygen-evolving complex and a large number of cofactors. It forms dimeric complexes.

It localises to the plastid. The protein localises to the chloroplast thylakoid membrane. One of the components of the core complex of photosystem II (PSII). PSII is a light-driven water:plastoquinone oxidoreductase that uses light energy to abstract electrons from H(2)O, generating O(2) and a proton gradient subsequently used for ATP formation. It consists of a core antenna complex that captures photons, and an electron transfer chain that converts photonic excitation into a charge separation. The protein is Photosystem II reaction center protein J of Lolium perenne (Perennial ryegrass).